Here is a 429-residue protein sequence, read N- to C-terminus: GTPase Obg (429 aa).

The Obg domain maps to 1 to 158 (MLIDKCTLFL…IEAQFELKYI (158 aa)). The OBG-type G domain occupies 159 to 330 (ADVGLLGLPN…LLKDIFKDYK (172 aa)). GTP is bound by residues 165 to 172 (GLPNAGKS), 190 to 194 (FTTLS), 211 to 214 (DIPG), 281 to 284 (NKID), and 311 to 313 (SGF). Positions 172 and 192 each coordinate Mg(2+). An OCT domain is found at 351 to 429 (KVEKEQEDIV…RIQDVMFEIN (79 aa)).

It belongs to the TRAFAC class OBG-HflX-like GTPase superfamily. OBG GTPase family. Monomer. Mg(2+) serves as cofactor.

It localises to the cytoplasm. Functionally, an essential GTPase which binds GTP, GDP and possibly (p)ppGpp with moderate affinity, with high nucleotide exchange rates and a fairly low GTP hydrolysis rate. Plays a role in control of the cell cycle, stress response, ribosome biogenesis and in those bacteria that undergo differentiation, in morphogenesis control. The polypeptide is GTPase Obg (Malacoplasma penetrans (strain HF-2) (Mycoplasma penetrans)).